We begin with the raw amino-acid sequence, 1024 residues long: Beta-galactosidase (1024 aa).

Residues N103 and D202 each contribute to the substrate site. D202 contacts Na(+). Positions 417, 419, and 462 each coordinate Mg(2+). Residues E462 and 538–541 contribute to the substrate site; that span reads EYAH. E462 serves as the catalytic Proton donor. The active-site Nucleophile is the E538. Position 598 (N598) interacts with Mg(2+). Residues F602 and N605 each coordinate Na(+). Positions 605 and 1000 each coordinate substrate.

It belongs to the glycosyl hydrolase 2 family. As to quaternary structure, homotetramer. Mg(2+) serves as cofactor. The cofactor is Na(+).

It catalyses the reaction Hydrolysis of terminal non-reducing beta-D-galactose residues in beta-D-galactosides.. The chain is Beta-galactosidase from Escherichia coli O6:H1 (strain CFT073 / ATCC 700928 / UPEC).